A 401-amino-acid chain; its full sequence is Glucose/mannose transporter GlcP (401 aa).

12 helical membrane passes run 11 to 31 (AFFF…PFLL), 43 to 63 (VIIF…PLMI), 78 to 98 (IMLV…IIVM), 99 to 119 (AFLL…FVIA), 132 to 152 (EVLF…FIDI), 156 to 176 (FLPY…WLIF), 212 to 232 (LGFF…FANF), 247 to 267 (LISV…IGFV), 278 to 298 (LFSC…SNPI), 306 to 326 (LIGL…SIII), 336 to 356 (LFIA…GWSL), and 360 to 380 (TILL…GISV).

The protein belongs to the major facilitator superfamily.

The protein resides in the cell membrane. In terms of biological role, can transport glucose, mannose, 2-deoxyglucose and methyl alpha-glucoside, but not galactose. This chain is Glucose/mannose transporter GlcP (glcP), found in Bacillus subtilis (strain 168).